The chain runs to 503 residues: 26S proteasome non-ATPase regulatory subunit 5 (503 aa).

A2 bears the N-acetylalanine mark.

This sequence belongs to the proteasome subunit S5B/HSM3 family. Interacts with PSMC1, PSMC2, PSMD1 and PSMD6. Part of transient complex containing PSMD5, PSMC2, PSMC1 and PSMD2 formed during the assembly of the 26S proteasome.

In terms of biological role, acts as a chaperone during the assembly of the 26S proteasome, specifically of the base subcomplex of the PA700/19S regulatory complex (RC). In the initial step of the base subcomplex assembly is part of an intermediate PSMD5:PSMC2:PSMC1:PSMD2 module which probably assembles with a PSMD10:PSMC4:PSMC5:PAAF1 module followed by dissociation of PSMD5. This Bos taurus (Bovine) protein is 26S proteasome non-ATPase regulatory subunit 5 (PSMD5).